The sequence spans 286 residues: Inositol polyphosphate multikinase alpha (286 aa).

Positions 1 to 22 (MQLKVPEHQVAGHIAKDGKPGP) are disordered.

This sequence belongs to the inositol phosphokinase (IPK) family. In terms of processing, phosphorylated. As to expression, detected in leaves, stems, roots, siliques and flowers. Highly expressed in root tissues, anthers, the stigma, pollen grains and growing pollen tubes.

The protein resides in the nucleus. The protein localises to the cell membrane. The enzyme catalyses 1D-myo-inositol 1,4,5-trisphosphate + 2 ATP = 1D-myo-inositol 1,3,4,5,6-pentakisphosphate + 2 ADP + 2 H(+). The catalysed reaction is 1D-myo-inositol 1,3,4,6-tetrakisphosphate + ATP = 1D-myo-inositol 1,3,4,5,6-pentakisphosphate + ADP + H(+). Its function is as follows. Inositol phosphate kinase with a broad substrate specificity. Phosphorylates inositol 1,4,5-trisphosphate (Ins(1,4,5)P3), inositol 1,4,5,6-tetrakisphosphate (Ins(1,4,5,6)P4), inositol 1,3,4,5-tetrakisphosphate (Ins(1,3,4,5)P4), inositol 1,3,4,6-tetrakisphosphate (Ins(1,3,4,6)P4) and inositol 1,2,3,4,6-pentakisphosphate (Ins(1,2,3,4,6)P5) but not inositol 1,4-bisphosphate (Ins(1,4)P2), inositol 1,3,4-trisphosphate (Ins(1,3,4)P3), inositol 1,2,6-trisphosphate (Ins(1,2,6)P3), inositol 3,4,5,6-tetrakisphosphate (Ins(3,4,5,6)P4), inositol 1,3,4,5,6-pentakisphosphate (Ins(1,3,4,5,6)P5), inositol 1,2,4,5,6-pentakisphosphate (Ins(1,2,4,5,6)P5) or inositol hexakisphosphate (InsP6). Regulates pollen and root development probably through the regulation of InsP3-mediated calcium accumulation. The sequence is that of Inositol polyphosphate multikinase alpha (IPK2a) from Arabidopsis thaliana (Mouse-ear cress).